The primary structure comprises 375 residues: Aldehyde reductase FrzD (375 aa).

3 residues coordinate FMN: Ala-61, Gln-103, and His-171. Tyr-176 (proton donor) is an active-site residue. Residues Lys-223, Gly-294, and Arg-319 each contribute to the FMN site.

It belongs to the NADH:flavin oxidoreductase/NADH oxidase family. Requires FMN as cofactor.

It catalyses the reaction (1S,4S)-4-[(4-hydroxyphenyl)methyl]-2,5-diazaspiro[bicyclo[3.2.1]octane-6,1'-cyclohexane]-2',5'-dien-4'-one + 2 NADPH + 2 H(+) = (1S,4S)-4-[(4-hydroxyphenyl)methyl]-2,5-diazaspiro[bicyclo[3.2.1]octane-6,1'-cyclohexan]-4'-one + 2 NADP(+). The protein operates within alkaloid biosynthesis; ergot alkaloid biosynthesis. Aldehyde reductase; part of the gene cluster that mediates the biosynthesis of the alkaloid (-)-FR901483, a potent immunosuppressant that shows efficacy in animal models and a probable inhibitor of purine nucleotide biosynthesis by targeting phosphoribosylpyrophosphate amidotransferase (PPAT). Within the pathway, FrzD reduces the dienone portion of the pathway intermediates to cyclohexanone. The biosynthesis of (-)-FR901483 starts with the condensation of two L-tyrosines to yield (S,S)-dityrosyl-piperazine. This process occurs in 3 steps with the non-canonical nonribosomal peptide synthetase FrzA catalyzing the reduction of L-tyrosine into L-tyrosinal, the spontaneous condensation of 2 L-tyrosinal units, and the subsequent reduction by the NmrA-like family domain-containing oxidoreductase FrzB. The cytochrome P450 monooxygenase FrzC then performs coupling between N10 and C1' to morph the piperazine into a 1,4-diazabicyclo[3.2.1]octane spiro-fused to a 2,5-cyclohexadienone. The dienone portion is further reduced to cyclohexanone by the flavin-dependent reductase FrzD. The methyltranserases (MTs) FrzE and FrzF are then involved in the methylation at the C10' amine and the C4 phenolic oxygen, respectively. The order of the two MTs appear to be interchangeable. Cleavage of the C9-N10' bond by the dioxygenase FrzG then leads to formation of a conjugated iminium. In addition to the oxidation of C9, an additional dehydrogenation between C7 and C8 can occur to give a likely shunt product. The next biosynthetic step is the intramolecular aldol condensation catalyzed by the newly identified aldolase FrzH to yield an aza-tricyclic product with the formation of a C9-C3' bond. The short-chain dehydrogenase/reductase FrzI then produces dephospho-(-)-FR901483 that is phosphorylated at C4'-OH into (-)-FR901483 by the phosphotransferase FrzJ. The only unassigned enzyme in the cluster is the second cytochrome P450 monooxygenase FrzL. This is Aldehyde reductase FrzD from Cladobotryum sp.